The primary structure comprises 206 residues: Histidine biosynthesis bifunctional protein HisIE (206 aa).

A phosphoribosyl-AMP cyclohydrolase region spans residues 1–114 (MLKKINFIDI…FQVPSENLFF (114 aa)). Residues 115 to 206 (LHDLDCMLKF…NLKMRSNKQV (92 aa)) are phosphoribosyl-ATP pyrophosphohydrolase.

It in the N-terminal section; belongs to the PRA-CH family. The protein in the C-terminal section; belongs to the PRA-PH family.

It localises to the cytoplasm. It carries out the reaction 1-(5-phospho-beta-D-ribosyl)-ATP + H2O = 1-(5-phospho-beta-D-ribosyl)-5'-AMP + diphosphate + H(+). The catalysed reaction is 1-(5-phospho-beta-D-ribosyl)-5'-AMP + H2O = 1-(5-phospho-beta-D-ribosyl)-5-[(5-phospho-beta-D-ribosylamino)methylideneamino]imidazole-4-carboxamide. The protein operates within amino-acid biosynthesis; L-histidine biosynthesis; L-histidine from 5-phospho-alpha-D-ribose 1-diphosphate: step 2/9. It functions in the pathway amino-acid biosynthesis; L-histidine biosynthesis; L-histidine from 5-phospho-alpha-D-ribose 1-diphosphate: step 3/9. This Buchnera aphidicola subsp. Baizongia pistaciae (strain Bp) protein is Histidine biosynthesis bifunctional protein HisIE (hisI).